The primary structure comprises 631 residues: MDYDYEKLGLKVGLEIHQQLNTKRKLFCNCPTKIRDDEPHGEIERVLRPSQSEMGHVDKAALLESKKEKKFIYQYYNDTTCLVELDDEPPHDVAPDAVDTALEVSTLMNMKMADEVQIMRKMVIDGSNTSGFQRTMFVSQEGFIETEYGNIGVTSLCLEEDACKKIEDGKDYTKYCVDRLGIPLLEITTEPDITSPKMGKEAARRIGTILRATGKVKRGLGTIRQDVNISIRNGARIEVKGVQNLDLIEKIIENEVTRQISLNEIKEELLKRNAEVVDEIKDITELLKDTESKVLKSALKNKGVIRAILLKGFSGMIGREVQPGRRLGTEFSDRGKVLGGVGGLFHTDELPKYGITEEEVTKLKEYMNCGENDAVILVADKKNKVERALNAVIERAKESMIGIPEETRKALDDGNTSYLRPLPGAARMYPETDVPTITITEEKLEAIRNNLPEMPEEKLVRFVKEYELNEDLAKQMVMSYHVDLFESLSKKYSKIKPTLIATTLEATLKEIKREGLDTDLLTEEHLEEVFKGLSEDKMSKEAVPEVIKGFIENPTKKLDEILEIKGMTSMSVEEVESIIEDIINQNIATVNEKGMGAMGLLMGRCMAQLRGKADGKIINTTLQKKLKEKVQ.

It belongs to the GatB/GatE family. GatE subfamily. As to quaternary structure, heterodimer of GatD and GatE.

It carries out the reaction L-glutamyl-tRNA(Gln) + L-glutamine + ATP + H2O = L-glutaminyl-tRNA(Gln) + L-glutamate + ADP + phosphate + H(+). In terms of biological role, allows the formation of correctly charged Gln-tRNA(Gln) through the transamidation of misacylated Glu-tRNA(Gln) in organisms which lack glutaminyl-tRNA synthetase. The reaction takes place in the presence of glutamine and ATP through an activated gamma-phospho-Glu-tRNA(Gln). The GatDE system is specific for glutamate and does not act on aspartate. In Methanococcus maripaludis (strain C6 / ATCC BAA-1332), this protein is Glutamyl-tRNA(Gln) amidotransferase subunit E.